The primary structure comprises 421 residues: 2',3'-cyclic-nucleotide 3'-phosphodiesterase (421 aa).

2 positions are modified to phosphoserine: Ser6 and Ser9. The residue at position 110 (Tyr110) is a Phosphotyrosine. A Phosphoserine modification is found at Ser170. Residue His251 is the Proton acceptor of the active site. Residue Thr253 participates in substrate binding. Catalysis depends on His330, which acts as the Proton donor. Residue Thr332 coordinates substrate. The residue at position 359 (Ser359) is a Phosphoserine. Cys418 is subject to Cysteine methyl ester. Cys418 is lipidated: S-farnesyl cysteine. Residues Thr419–Ile421 constitute a propeptide, removed in mature form.

Belongs to the 2H phosphoesterase superfamily. CNPase family. In terms of assembly, exists as monomers and homodimers.

It is found in the membrane. The protein localises to the melanosome. The enzyme catalyses a nucleoside 2',3'-cyclic phosphate + H2O = a nucleoside 2'-phosphate + H(+). Functionally, catalyzes the formation of 2'-nucleotide products from 2',3'-cyclic substrates. May participate in RNA metabolism in the myelinating cell, CNP is the third most abundant protein in central nervous system myelin. The protein is 2',3'-cyclic-nucleotide 3'-phosphodiesterase of Pongo abelii (Sumatran orangutan).